The primary structure comprises 46 residues: PhoP/PhoQ regulator MgrB (46 aa).

A helical membrane pass occupies residues 6–26; the sequence is WVALVVVVLACLLLWAQVFNM.

The protein belongs to the MgrB family. May form homooligomers. Probably interacts with the periplasmic domain of PhoQ.

The protein resides in the cell inner membrane. Its function is as follows. PhoP-regulated transcription is redox-sensitive, being activated when the periplasm becomes more reducing. MgrB acts between DsbA/DsbB and PhoP/PhoQ in this pathway. Represses PhoP/PhoQ signaling, possibly by binding to the periplasmic domain of PhoQ, altering its activity and that of downstream effector PhoP. This Escherichia coli O6:K15:H31 (strain 536 / UPEC) protein is PhoP/PhoQ regulator MgrB.